The chain runs to 137 residues: Small ribosomal subunit protein uS12 (137 aa).

Asp102 is subject to 3-methylthioaspartic acid.

Belongs to the universal ribosomal protein uS12 family. Part of the 30S ribosomal subunit. Contacts proteins S8 and S17. May interact with IF1 in the 30S initiation complex.

Functionally, with S4 and S5 plays an important role in translational accuracy. Its function is as follows. Interacts with and stabilizes bases of the 16S rRNA that are involved in tRNA selection in the A site and with the mRNA backbone. Located at the interface of the 30S and 50S subunits, it traverses the body of the 30S subunit contacting proteins on the other side and probably holding the rRNA structure together. The combined cluster of proteins S8, S12 and S17 appears to hold together the shoulder and platform of the 30S subunit. This Mycoplasmopsis agalactiae (strain NCTC 10123 / CIP 59.7 / PG2) (Mycoplasma agalactiae) protein is Small ribosomal subunit protein uS12.